A 53-amino-acid chain; its full sequence is UPF0391 membrane protein msr4317 (53 aa).

The next 2 helical transmembrane spans lie at 4-24 (WIII…PALA) and 33-53 (ILIG…FAVT).

This sequence belongs to the UPF0391 family.

It is found in the cell membrane. This is UPF0391 membrane protein msr4317 from Mesorhizobium japonicum (strain LMG 29417 / CECT 9101 / MAFF 303099) (Mesorhizobium loti (strain MAFF 303099)).